The chain runs to 183 residues: MSQYSGKICFYEGRCFTGRCLEVYGDCDNFQDRGFMNRVNSIRVESGAWICYDHPDFKGQQYILERGEYPEFQRWNSHNDHMGSCRPIRMHGEQYRMELFEGCNYTGQCMELCDDCPFLQSRGFNTNCVNSVRVFGDGAWVMYEEPNFRGRMYIVERGNYCGHNEWQAQNPHIQSIRRIVNYF.

Beta/gamma crystallin 'Greek key' domains are found at residues 6-46 (GKIC…RVES), 47-89 (GAWI…RPIR), 95-136 (YRME…RVFG), and 138-180 (GAWV…RRIV).

It belongs to the beta/gamma-crystallin family. In terms of assembly, monomer.

In terms of biological role, crystallins are the dominant structural components of the vertebrate eye lens. The chain is Gamma-crystallin N-B (crygnb) from Danio rerio (Zebrafish).